The primary structure comprises 275 residues: Dermonecrotic toxin LspiSicTox-betaIE4i (275 aa).

Mg(2+)-binding residues include glutamate 24 and aspartate 26. Histidine 40 acts as the Nucleophile in catalysis. Intrachain disulfides connect cysteine 44-cysteine 50 and cysteine 46-cysteine 188. Residue aspartate 84 coordinates Mg(2+).

Belongs to the arthropod phospholipase D family. Class II subfamily. Requires Mg(2+) as cofactor. As to expression, expressed by the venom gland.

The protein localises to the secreted. The enzyme catalyses an N-(acyl)-sphingosylphosphocholine = an N-(acyl)-sphingosyl-1,3-cyclic phosphate + choline. It carries out the reaction an N-(acyl)-sphingosylphosphoethanolamine = an N-(acyl)-sphingosyl-1,3-cyclic phosphate + ethanolamine. The catalysed reaction is a 1-acyl-sn-glycero-3-phosphocholine = a 1-acyl-sn-glycero-2,3-cyclic phosphate + choline. It catalyses the reaction a 1-acyl-sn-glycero-3-phosphoethanolamine = a 1-acyl-sn-glycero-2,3-cyclic phosphate + ethanolamine. Its function is as follows. Dermonecrotic toxins cleave the phosphodiester linkage between the phosphate and headgroup of certain phospholipids (sphingolipid and lysolipid substrates), forming an alcohol (often choline) and a cyclic phosphate. This toxin acts on sphingomyelin (SM). It may also act on ceramide phosphoethanolamine (CPE), lysophosphatidylcholine (LPC) and lysophosphatidylethanolamine (LPE), but not on lysophosphatidylserine (LPS), and lysophosphatidylglycerol (LPG). It acts by transphosphatidylation, releasing exclusively cyclic phosphate products as second products. Induces dermonecrosis, hemolysis, increased vascular permeability, edema, inflammatory response, and platelet aggregation. This chain is Dermonecrotic toxin LspiSicTox-betaIE4i, found in Loxosceles spinulosa (Recluse spider).